The chain runs to 524 residues: Cytochrome P450 monooxygenase ATR4 (524 aa).

The chain crosses the membrane as a helical span at residues 13-36 (IITYLDSLTWVGMALPLFSLCWAI). N-linked (GlcNAc...) asparagine glycans are attached at residues asparagine 291, asparagine 444, and asparagine 454.

Belongs to the cytochrome P450 family. Requires heme as cofactor.

It is found in the membrane. It functions in the pathway mycotoxin biosynthesis. Functionally, cytochrome P450 monooxygenase; part of the core atranone cluster (CAC) which products are predicted to catalyze most or all steps of mycotoxin atranone synthesis, starting from geranylgeranyl pyrophosphate (GGPP). The initial cyclization of GGPP to dolabellane is probably performed by the terpene cyclase ATR13. The Baeyer-Villiger oxidation near the end of the atranone synthesis, which converts atranones D and E to atranones F and G is predicted to be catalyzed by the monooxygenase ATR8. Of the CAC's other predicted gene products, the reducing PKS ATR6 might synthesize a polyketide chain. This polyketide is probably transferred onto the atranone backbone by the polyketide transferase ATR5. Other predicted CAC products include 4 oxygenases (ATR2, ATR3, ATR4, and ATR14), 3 short-chain reductases (ATR7, ATR9, and ATR10), and a methyltransferase (ATR12). These may all be involved in the various steps of atranone biosynthesis, although their specific roles must await experimental determination. This is Cytochrome P450 monooxygenase ATR4 from Stachybotrys chlorohalonatus (strain IBT 40285).